We begin with the raw amino-acid sequence, 622 residues long: Low affinity potassium transport system protein Kup (622 aa).

Helical transmembrane passes span 9-29 (LPAI…TSPL), 49-69 (VFGF…IKYL), 103-123 (VIMG…TPAI), 137-157 (PQLD…LFMI), 165-185 (VGKL…GLGL), 213-233 (VSFI…VLYA), 247-267 (WFTV…ALLL), 276-296 (PFFL…AALA), 337-357 (IYIP…IVSF), 363-383 (LAAA…ILST), 396-416 (FVAL…TANL), and 419-439 (LLSG…VMTT).

Belongs to the HAK/KUP transporter (TC 2.A.72) family.

It is found in the cell inner membrane. It carries out the reaction K(+)(in) + H(+)(in) = K(+)(out) + H(+)(out). In terms of biological role, responsible for the low-affinity transport of potassium into the cell. Likely operates as a K(+):H(+) symporter. This Shigella flexneri protein is Low affinity potassium transport system protein Kup.